A 1274-amino-acid chain; its full sequence is Vacuolar protein sorting-associated protein 8 (1274 aa).

M1 is modified (N-acetylmethionine). WD repeat units follow at residues 75 to 119 (THVY…QTIL), 131 to 170 (SIRSPVKSIVICSDGTHVAASYETGNICIWNLNVGYRVKP), and 193 to 233 (HVNK…FWQL). CHCR repeat units lie at residues 507 to 665 (LQQS…YPQN) and 915 to 1092 (FDLL…KYPS). The RING-type; atypical zinc-finger motif lies at 1198-1266 (CEICGKKIWG…PDEYSCLICQ (69 aa)).

It belongs to the VPS8 family.

Its subcellular location is the golgi apparatus. It localises to the golgi stack. Functionally, required for localization and recycling of the CPY sorting receptor (VPS10) to the late-Golgi compartment. Involved in the retention of proteins to the late-Golgi. Plays an integral role in the complex vacuolar protein sorting process. In Saccharomyces cerevisiae (strain ATCC 204508 / S288c) (Baker's yeast), this protein is Vacuolar protein sorting-associated protein 8 (VPS8).